Reading from the N-terminus, the 540-residue chain is ATP-dependent RNA helicase DBP3 (540 aa).

Residues 1 to 35 (MTVEESKKRKLTDDVAIKQNEKKIKKDKKVKDKKD) show a composition bias toward basic and acidic residues. Residues 1–89 (MTVEESKKRK…TTEQPSKQVK (89 aa)) are disordered. Over residues 36–52 (KKDKKDKKDKKEKKEKK) the composition is skewed to basic residues. Composition is skewed to basic and acidic residues over residues 53–62 (EKKEKNDKKD) and 68–79 (DKKAEQVDKLSE). Positions 130–156 (LAFNQISLDKEVQNEIAKFPKPTPIQA) match the Q motif motif. A Helicase ATP-binding domain is found at 159 to 332 (WPYLLSGKDV…STFMKEPVKV (174 aa)). An ATP-binding site is contributed by 172 to 179 (AETGSGKT). The DEAD box motif lies at 279-282 (DEAD). The Helicase C-terminal domain maps to 361 to 510 (KLLDLLKKYQ…PVPEDLIKFG (150 aa)).

It belongs to the DEAD box helicase family. DDX5/DBP2 subfamily.

It localises to the nucleus. It is found in the nucleolus. The catalysed reaction is ATP + H2O = ADP + phosphate + H(+). In terms of biological role, ATP-dependent RNA helicase required for 60S ribosomal subunit synthesis. Involved in efficient pre-rRNA processing, predominantly at site A3, which is necessary for the normal formation of 25S and 5.8S rRNAs. The polypeptide is ATP-dependent RNA helicase DBP3 (DBP3) (Candida glabrata (strain ATCC 2001 / BCRC 20586 / JCM 3761 / NBRC 0622 / NRRL Y-65 / CBS 138) (Yeast)).